Reading from the N-terminus, the 170-residue chain is Peptide deformylase 1 (170 aa).

The Fe cation site is built by cysteine 92 and histidine 135. The active site involves glutamate 136. Fe cation is bound at residue histidine 139.

This sequence belongs to the polypeptide deformylase family. The cofactor is Fe(2+).

The catalysed reaction is N-terminal N-formyl-L-methionyl-[peptide] + H2O = N-terminal L-methionyl-[peptide] + formate. Removes the formyl group from the N-terminal Met of newly synthesized proteins. Requires at least a dipeptide for an efficient rate of reaction. N-terminal L-methionine is a prerequisite for activity but the enzyme has broad specificity at other positions. This Coxiella burnetii (strain RSA 493 / Nine Mile phase I) protein is Peptide deformylase 1.